The sequence spans 853 residues: Envelope glycoprotein gp160 (853 aa).

A signal peptide spans 1–31; the sequence is MRVKEIRKNWQHLRGGILLLGMLMICSAAKE. The Extracellular segment spans residues 32 to 681; sequence KTWVTIYYGV…ITNWLWYIRL (650 aa). Residues Cys-53 and Cys-73 are joined by a disulfide bond. 19 N-linked (GlcNAc...) asparagine; by host glycosylation sites follow: Asn-87, Asn-129, Asn-134, Asn-138, Asn-157, Asn-189, Asn-199, Asn-232, Asn-236, Asn-243, Asn-264, Asn-278, Asn-291, Asn-297, Asn-303, Asn-333, Asn-340, Asn-356, and Asn-362. Disulfide bonds link Cys-118–Cys-207, Cys-125–Cys-198, Cys-130–Cys-158, Cys-220–Cys-249, and Cys-230–Cys-241. The segment at 130–157 is V1; that stretch reads CTNLNITKNTTNPTSSSWGMMEKGEIKN. Residues 158 to 198 are V2; the sequence is CSFYITTSIRNKVKKEYALFNRLDVVPIENTNNTKYRLISC. The segment at 298-331 is V3; that stretch reads CTRPNNNTRRRLSIGPGRAFYARRNIIGDIRQAH. A disulfide bridge connects residues Cys-298 and Cys-332. Residues 364–374 form a CD4-binding loop region; it reads SSGGDPEIVMH. 2 disulfide bridges follow: Cys-378-Cys-441 and Cys-385-Cys-414. The V4 stretch occupies residues 385-414; sequence CNTAQLFNSTWNVTGGTNGTEGNDIITLQC. Asn-392, Asn-396, Asn-402, Asn-444, and Asn-456 each carry an N-linked (GlcNAc...) asparagine; by host glycan. The tract at residues 459–468 is V5; that stretch reads ETETEIFRPG. The interval 509-529 is fusion peptide; sequence AVGIGAVFLGFLGAAGSTMGA. An immunosuppression region spans residues 571–589; sequence KQLQARVLALERYLRDQQL. Residues Cys-595 and Cys-601 are joined by a disulfide bond. N-linked (GlcNAc...) asparagine; by host glycosylation is found at Asn-608, Asn-613, Asn-622, and Asn-634. Residues 630-664 adopt a coiled-coil conformation; the sequence is REIDNYTDYIYDLLEKSQTQQEKNEKELLELDKWA. The tract at residues 659–680 is MPER; binding to GalCer; the sequence is ELDKWASLWNWFDITNWLWYIR. Residues 682-702 traverse the membrane as a helical segment; sequence FIMIVGGLIGLRIVFAVLSIV. Over 703–853 the chain is Cytoplasmic; it reads NRVRQGYSPL…IRQGLERALL (151 aa). The short motif at 709 to 712 is the YXXL motif; contains endocytosis signal element; sequence YSPL. The disordered stretch occupies residues 718–740; it reads LPASRGPDRPEGTEEEGGERDRD. Residues Cys-761 and Cys-834 are each lipidated (S-palmitoyl cysteine; by host). The Di-leucine internalization motif motif lies at 852–853; it reads LL.

Belongs to the HIV-1 env protein family. As to quaternary structure, the mature envelope protein (Env) consists of a homotrimer of non-covalently associated gp120-gp41 heterodimers. The resulting complex protrudes from the virus surface as a spike. There seems to be as few as 10 spikes on the average virion. Interacts with host CD4, CCR5 and CXCR4. Gp120 also interacts with the C-type lectins CD209/DC-SIGN and CLEC4M/DC-SIGNR (collectively referred to as DC-SIGN(R)). Gp120 and gp41 interact with GalCer. Gp120 interacts with host ITGA4/ITGB7 complex; on CD4+ T-cells, this interaction results in rapid activation of integrin ITGAL/LFA-1, which facilitates efficient cell-to-cell spreading of HIV-1. Gp120 interacts with cell-associated heparan sulfate; this interaction increases virus infectivity on permissive cells and may be involved in infection of CD4- cells. In terms of assembly, the mature envelope protein (Env) consists of a homotrimer of non-covalently associated gp120-gp41 heterodimers. The resulting complex protrudes from the virus surface as a spike. There seems to be as few as 10 spikes on the average virion. Highly glycosylated by host. The high number of glycan on the protein is reffered to as 'glycan shield' because it contributes to hide protein sequence from adaptive immune system. Post-translationally, palmitoylation of the transmembrane protein and of Env polyprotein (prior to its proteolytic cleavage) is essential for their association with host cell membrane lipid rafts. Palmitoylation is therefore required for envelope trafficking to classical lipid rafts, but not for viral replication. In terms of processing, specific enzymatic cleavages in vivo yield mature proteins. Envelope glycoproteins are synthesized as an inactive precursor that is heavily N-glycosylated and processed likely by host cell furin in the Golgi to yield the mature SU and TM proteins. The cleavage site between SU and TM requires the minimal sequence [KR]-X-[KR]-R. About 2 of the 9 disulfide bonds of gp41 are reduced by P4HB/PDI, following binding to CD4 receptor.

Its subcellular location is the virion membrane. It is found in the host cell membrane. The protein resides in the host endosome membrane. Its function is as follows. Oligomerizes in the host endoplasmic reticulum into predominantly trimers. In a second time, gp160 transits in the host Golgi, where glycosylation is completed. The precursor is then proteolytically cleaved in the trans-Golgi and thereby activated by cellular furin or furin-like proteases to produce gp120 and gp41. Attaches the virus to the host lymphoid cell by binding to the primary receptor CD4. This interaction induces a structural rearrangement creating a high affinity binding site for a chemokine coreceptor like CXCR4 and/or CCR5. Acts as a ligand for CD209/DC-SIGN and CLEC4M/DC-SIGNR, which are respectively found on dendritic cells (DCs), and on endothelial cells of liver sinusoids and lymph node sinuses. These interactions allow capture of viral particles at mucosal surfaces by these cells and subsequent transmission to permissive cells. HIV subverts the migration properties of dendritic cells to gain access to CD4+ T-cells in lymph nodes. Virus transmission to permissive T-cells occurs either in trans (without DCs infection, through viral capture and transmission), or in cis (following DCs productive infection, through the usual CD4-gp120 interaction), thereby inducing a robust infection. In trans infection, bound virions remain infectious over days and it is proposed that they are not degraded, but protected in non-lysosomal acidic organelles within the DCs close to the cell membrane thus contributing to the viral infectious potential during DCs' migration from the periphery to the lymphoid tissues. On arrival at lymphoid tissues, intact virions recycle back to DCs' cell surface allowing virus transmission to CD4+ T-cells. Functionally, acts as a class I viral fusion protein. Under the current model, the protein has at least 3 conformational states: pre-fusion native state, pre-hairpin intermediate state, and post-fusion hairpin state. During fusion of viral and target intracellular membranes, the coiled coil regions (heptad repeats) assume a trimer-of-hairpins structure, positioning the fusion peptide in close proximity to the C-terminal region of the ectodomain. The formation of this structure appears to drive apposition and subsequent fusion of viral and target cell membranes. Complete fusion occurs in host cell endosomes and is dynamin-dependent, however some lipid transfer might occur at the plasma membrane. The virus undergoes clathrin-dependent internalization long before endosomal fusion, thus minimizing the surface exposure of conserved viral epitopes during fusion and reducing the efficacy of inhibitors targeting these epitopes. Membranes fusion leads to delivery of the nucleocapsid into the cytoplasm. In Human immunodeficiency virus type 1 group M subtype B (strain 89.6) (HIV-1), this protein is Envelope glycoprotein gp160.